The primary structure comprises 71 residues: uncharacterized protein (71 aa).

Residues 12-32 (FLVSIAFFGLAPTIPLLAIAL) traverse the membrane as a helical segment.

It localises to the membrane. This is an uncharacterized protein from Sinorhizobium fredii (strain NBRC 101917 / NGR234).